Reading from the N-terminus, the 325-residue chain is Diaminopimelate epimerase (325 aa).

Residues Asn-11 and Asn-69 each contribute to the substrate site. Cys-78 acts as the Proton donor in catalysis. Residues 79-80 (GN), Asn-166, Asn-203, and 221-222 (ER) contribute to the substrate site. Cys-230 functions as the Proton acceptor in the catalytic mechanism. Position 231–232 (231–232 (GT)) interacts with substrate.

It belongs to the diaminopimelate epimerase family. Homodimer.

It localises to the cytoplasm. It carries out the reaction (2S,6S)-2,6-diaminopimelate = meso-2,6-diaminopimelate. It participates in amino-acid biosynthesis; L-lysine biosynthesis via DAP pathway; DL-2,6-diaminopimelate from LL-2,6-diaminopimelate: step 1/1. Catalyzes the stereoinversion of LL-2,6-diaminopimelate (L,L-DAP) to meso-diaminopimelate (meso-DAP), a precursor of L-lysine and an essential component of the bacterial peptidoglycan. This Ligilactobacillus salivarius (strain UCC118) (Lactobacillus salivarius) protein is Diaminopimelate epimerase.